We begin with the raw amino-acid sequence, 249 residues long: ATP synthase subunit a, chloroplastic (249 aa).

The next 5 helical transmembrane spans lie at 40–60, 97–117, 136–156, 201–221, and 222–242; these read QVLI…VLAV, VPFI…GALL, INTT…AGLS, LVVV…VMFL, and GLFT…AYIG.

The protein belongs to the ATPase A chain family. As to quaternary structure, F-type ATPases have 2 components, CF(1) - the catalytic core - and CF(0) - the membrane proton channel. CF(1) has five subunits: alpha(3), beta(3), gamma(1), delta(1), epsilon(1). CF(0) has four main subunits: a, b, b' and c.

It localises to the plastid. The protein localises to the chloroplast thylakoid membrane. In terms of biological role, key component of the proton channel; it plays a direct role in the translocation of protons across the membrane. In Draba nemorosa (Woodland whitlowgrass), this protein is ATP synthase subunit a, chloroplastic.